The primary structure comprises 220 residues: FMN-dependent NADH:quinone oxidoreductase (220 aa).

FMN contacts are provided by residues Ser-10, 17–19 (SAS), and 136–139 (SRGG). Residues 200–220 (HSEAVTKAKELTERLTADNGR) form a disordered region.

It belongs to the azoreductase type 1 family. As to quaternary structure, homodimer. FMN serves as cofactor.

It catalyses the reaction 2 a quinone + NADH + H(+) = 2 a 1,4-benzosemiquinone + NAD(+). It carries out the reaction N,N-dimethyl-1,4-phenylenediamine + anthranilate + 2 NAD(+) = 2-(4-dimethylaminophenyl)diazenylbenzoate + 2 NADH + 2 H(+). Quinone reductase that provides resistance to thiol-specific stress caused by electrophilic quinones. Its function is as follows. Also exhibits azoreductase activity. Catalyzes the reductive cleavage of the azo bond in aromatic azo compounds to the corresponding amines. The chain is FMN-dependent NADH:quinone oxidoreductase from Streptomyces coelicolor (strain ATCC BAA-471 / A3(2) / M145).